Reading from the N-terminus, the 324-residue chain is tRNA pseudouridine synthase B (324 aa).

Aspartate 49 acts as the Nucleophile in catalysis.

The protein belongs to the pseudouridine synthase TruB family. Type 1 subfamily.

The enzyme catalyses uridine(55) in tRNA = pseudouridine(55) in tRNA. Responsible for synthesis of pseudouridine from uracil-55 in the psi GC loop of transfer RNAs. The protein is tRNA pseudouridine synthase B of Tolumonas auensis (strain DSM 9187 / NBRC 110442 / TA 4).